The primary structure comprises 154 residues: MEQEEPCEAKETASSSIEPKTPNPNVPDSIPAIDSDSSLSEEEIVTEKDRGIVTLSPLCKQRIDSASISDCVLVSDDEIIESLYQNLLRVILSLQQIQSVAVVPEIWCFDGCKTPPPSSRNLDSNMVSDTCPGAPMKLTKISRNIDSGLRRKLF.

Positions 1–44 (MEQEEPCEAKETASSSIEPKTPNPNVPDSIPAIDSDSSLSEEEI) are disordered. The span at 27–38 (PDSIPAIDSDSS) shows a compositional bias: low complexity.

Interacts with CYCB2-4.

In terms of biological role, probable cyclin-dependent protein kinase (CDK) inhibitor that functions as a repressor of mitosis in the endoreduplication cell cycle. This Arabidopsis thaliana (Mouse-ear cress) protein is Cyclin-dependent protein kinase inhibitor SMR11.